A 617-amino-acid polypeptide reads, in one-letter code: Chaperone protein DnaK (617 aa).

Thr174 carries the phosphothreonine; by autocatalysis modification. The segment covering 575–592 (AQAQQQAQQQAQGQQGAQ) has biased composition (low complexity). Residues 575–617 (AQAQQQAQQQAQGQQGAQTDNQTGQNDGKTIDVDYEEVDDDDK) form a disordered region. Residues 593 to 602 (TDNQTGQNDG) show a composition bias toward polar residues. Acidic residues predominate over residues 607-617 (VDYEEVDDDDK).

This sequence belongs to the heat shock protein 70 family.

Acts as a chaperone. In Halothermothrix orenii (strain H 168 / OCM 544 / DSM 9562), this protein is Chaperone protein DnaK.